Here is a 74-residue protein sequence, read N- to C-terminus: Ubiquitin-like protein FUBI (74 aa).

The protein belongs to the ubiquitin family.

The protein is Ubiquitin-like protein FUBI (FAU) of Bos taurus (Bovine).